The chain runs to 283 residues: Pantothenate synthetase (283 aa).

30 to 37 (MGNLHDGH) serves as a coordination point for ATP. Residue His-37 is the Proton donor of the active site. Gln-61 contacts (R)-pantoate. Gln-61 is a binding site for beta-alanine. Residue 149-152 (GEKD) coordinates ATP. Gln-155 is a (R)-pantoate binding site. Residue 186–189 (LSSR) coordinates ATP.

Belongs to the pantothenate synthetase family. As to quaternary structure, homodimer.

Its subcellular location is the cytoplasm. The enzyme catalyses (R)-pantoate + beta-alanine + ATP = (R)-pantothenate + AMP + diphosphate + H(+). It participates in cofactor biosynthesis; (R)-pantothenate biosynthesis; (R)-pantothenate from (R)-pantoate and beta-alanine: step 1/1. Functionally, catalyzes the condensation of pantoate with beta-alanine in an ATP-dependent reaction via a pantoyl-adenylate intermediate. The protein is Pantothenate synthetase of Escherichia coli O6:K15:H31 (strain 536 / UPEC).